The following is a 355-amino-acid chain: DNA polymerase IV (355 aa).

One can recognise a UmuC domain in the interval Ile-7 to Gly-188. Positions 11 and 106 each coordinate Mg(2+). Residue Glu-107 is part of the active site.

This sequence belongs to the DNA polymerase type-Y family. In terms of assembly, monomer. The cofactor is Mg(2+).

Its subcellular location is the cytoplasm. It catalyses the reaction DNA(n) + a 2'-deoxyribonucleoside 5'-triphosphate = DNA(n+1) + diphosphate. Poorly processive, error-prone DNA polymerase involved in untargeted mutagenesis. Copies undamaged DNA at stalled replication forks, which arise in vivo from mismatched or misaligned primer ends. These misaligned primers can be extended by PolIV. Exhibits no 3'-5' exonuclease (proofreading) activity. May be involved in translesional synthesis, in conjunction with the beta clamp from PolIII. The polypeptide is DNA polymerase IV (Legionella pneumophila (strain Lens)).